A 308-amino-acid chain; its full sequence is CMP-N-acetylneuraminate:beta-galactoside alpha-2,3-sialyltransferase (308 aa).

Asp-201 serves as the catalytic Proton acceptor. CMP-N-acetyl-beta-neuraminate is bound by residues Leu-221–Arg-225, Phe-242–Glu-243, and Ser-262–Ser-263. Residue His-223 is the Proton donor of the active site.

It belongs to the glycosyltransferase 52 family. It depends on Divalent metal cations are not required for the alpha-2,3-sialyltransferase activity. as a cofactor.

Catalyzes the transfer of sialic acid from the substrate CMP-N-acetylneuraminate to lactosyl lipids as preferred acceptor substrates in vitro, forming alpha-2,3-linked sialosides. Beta-1,4-linked galactosyl lipids are better substrates than beta-1,3-linked galactosyl lipids. The natural acceptor substrate may be cell surface oligosaccharides in lipooligosaccharide (LOS), whose sialylation has been demonstrated vital for the virulence of P.multocida. The chain is CMP-N-acetylneuraminate:beta-galactoside alpha-2,3-sialyltransferase (lst) from Pasteurella multocida (strain Pm70).